The following is a 488-amino-acid chain: MEIAGNSSTISPTFSTPTKKRNLVFPNSPITPLHQQALLGRNGRSSKRCSPKSSFIRNSPKIDVVNTDWSIPLCGSPRNKSRPASRSDRFIPSRPNTANAFVNSISSDVPFDYSESVAEACGFDLNTRVLAFKLDAPEAKKPVDLRTQHNRPQRPVVTPAKRRFNTTPERVLDAPGIIDDYYLNLLDWSNLNVVAVALERNVYVWNADSGSVSALAETDESTYVASVKWSHDGSFLSVGLGNGLVDIYDVESQTKLRTMAGHQARVGCLSWNRHVLSSGSRSGAIHHHDVRIANHQIGTLQGHSSEVCGLAWRSDGLQLASGGNDNVVQIWDARSSIPKFTKTNHNAAVKAVAWCPWQSNLLATGGGTMDKQIHFWNAATGARVNTVDAGSQVTSLIWSPHSKEIMSTHGFPDNNLSIWSYSSSGLTKQVDIPAHDTRVLYSALSPDGRILSTAASDENLKFWRVYDGDHVKRPIPITKTPSSSITIR.

2 disordered regions span residues 1-29 and 74-93; these read MEIA…PNSP and CGSP…FIPS. Residues 7 to 17 show a composition bias toward low complexity; the sequence is SSTISPTFSTP. 7 WD repeats span residues 178-215, 219-258, 261-298, 302-341, 344-386, 388-429, and 434-473; these read IDDY…VSAL, DEST…KLRT, GHQA…HQIG, GHSS…PKFT, NHNA…RVNT, DAGS…LTKQ, and AHDT…HVKR.

The protein belongs to the WD repeat CDC20/Fizzy family. As to quaternary structure, interacts with cdc13, mad3 and mes1.

Required for mad2-dependent spindle checkpoint activation. Promotes ubiquitin-dependent degradation of cdc13 by the anaphase promoting complex/cyclosome (APC/C). The chain is WD repeat-containing protein slp1 (slp1) from Schizosaccharomyces pombe (strain 972 / ATCC 24843) (Fission yeast).